The sequence spans 34 residues: N(4)-(Beta-N-acetylglucosaminyl)-L-asparaginase (34 aa).

Threonine 18 acts as the Nucleophile in catalysis.

This sequence belongs to the Ntn-hydrolase family. In terms of assembly, heterotetramer of two alpha and two beta chains arranged as a dimer of alpha/beta heterodimers. Post-translationally, cleaved into an alpha and beta chain by autocatalysis; this activates the enzyme. The N-terminal residue of the beta subunit is responsible for the nucleophile hydrolase activity. N-glycosylated.

The protein localises to the lysosome. The enzyme catalyses N(4)-(beta-N-acetyl-D-glucosaminyl)-L-asparagine + H2O = N-acetyl-beta-D-glucosaminylamine + L-aspartate + H(+). Functionally, cleaves the GlcNAc-Asn bond which joins oligosaccharides to the peptide of asparagine-linked glycoproteins. In Sus scrofa (Pig), this protein is N(4)-(Beta-N-acetylglucosaminyl)-L-asparaginase (AGA).